We begin with the raw amino-acid sequence, 339 residues long: Ketol-acid reductoisomerase (NADP(+)) (339 aa).

The 182-residue stretch at 1-182 folds into the KARI N-terminal Rossmann domain; the sequence is MRVYYDRDAD…GGGRAGIIET (182 aa). Residues 24 to 27, Arg48, Ser51, Ser53, and 83 to 86 each bind NADP(+); these read YGSQ and DELQ. His108 is a catalytic residue. Gly134 lines the NADP(+) pocket. The KARI C-terminal knotted domain maps to 183 to 328; sequence TFKEECETDL…ERLRAMMPWI (146 aa). 4 residues coordinate Mg(2+): Asp191, Glu195, Glu227, and Glu231. Residue Ser252 participates in substrate binding.

Belongs to the ketol-acid reductoisomerase family. Mg(2+) serves as cofactor.

The catalysed reaction is (2R)-2,3-dihydroxy-3-methylbutanoate + NADP(+) = (2S)-2-acetolactate + NADPH + H(+). It catalyses the reaction (2R,3R)-2,3-dihydroxy-3-methylpentanoate + NADP(+) = (S)-2-ethyl-2-hydroxy-3-oxobutanoate + NADPH + H(+). The protein operates within amino-acid biosynthesis; L-isoleucine biosynthesis; L-isoleucine from 2-oxobutanoate: step 2/4. It functions in the pathway amino-acid biosynthesis; L-valine biosynthesis; L-valine from pyruvate: step 2/4. In terms of biological role, involved in the biosynthesis of branched-chain amino acids (BCAA). Catalyzes an alkyl-migration followed by a ketol-acid reduction of (S)-2-acetolactate (S2AL) to yield (R)-2,3-dihydroxy-isovalerate. In the isomerase reaction, S2AL is rearranged via a Mg-dependent methyl migration to produce 3-hydroxy-3-methyl-2-ketobutyrate (HMKB). In the reductase reaction, this 2-ketoacid undergoes a metal-dependent reduction by NADPH to yield (R)-2,3-dihydroxy-isovalerate. The polypeptide is Ketol-acid reductoisomerase (NADP(+)) (Methylobacterium nodulans (strain LMG 21967 / CNCM I-2342 / ORS 2060)).